Consider the following 108-residue polypeptide: Large ribosomal subunit protein uL24 (108 aa).

The protein belongs to the universal ribosomal protein uL24 family. As to quaternary structure, part of the 50S ribosomal subunit.

One of two assembly initiator proteins, it binds directly to the 5'-end of the 23S rRNA, where it nucleates assembly of the 50S subunit. Its function is as follows. One of the proteins that surrounds the polypeptide exit tunnel on the outside of the subunit. The polypeptide is Large ribosomal subunit protein uL24 (Mycoplasmopsis synoviae (strain 53) (Mycoplasma synoviae)).